A 183-amino-acid chain; its full sequence is Capsid protein (183 aa).

The interval 136–183 (NAPILSTLPETTVVRRRGRSPRRRTPSPRRRRSQSPRRRRSQSRESQC) is disordered. Over residues 149–176 (VRRRGRSPRRRTPSPRRRRSQSPRRRRS) the composition is skewed to basic residues. 3 positions are modified to phosphoserine; by host: S155, S162, and S170. The 1; half-length repeat unit spans residues 155–161 (SPRRRTP). The interval 155–177 (SPRRRTPSPRRRRSQSPRRRRSQ) is 3 X 8 AA repeats of S-P-R-R-R-[PR]-S-Q. A Bipartite nuclear localization signal motif is present at residues 158-175 (RRTPSPRRRRSQSPRRRR). 2 consecutive repeat copies span residues 162–169 (SPRRRRSQ) and 170–177 (SPRRRRSQ). The tract at residues 177-183 (QSRESQC) is RNA binding.

Belongs to the orthohepadnavirus core antigen family. As to quaternary structure, homodimerizes, then multimerizes. Interacts with cytosol exposed regions of viral L glycoprotein present in the reticulum-to-Golgi compartment. Interacts with human FLNB. Phosphorylated form interacts with host importin alpha; this interaction depends on the exposure of the NLS, which itself depends upon genome maturation and/or phosphorylation of the capsid protein. Interacts with host NUP153. Post-translationally, phosphorylated by host SRPK1, SRPK2, and maybe protein kinase C or GAPDH. Phosphorylation is critical for pregenomic RNA packaging. Protein kinase C phosphorylation is stimulated by HBx protein and may play a role in transport of the viral genome to the nucleus at the late step during the viral replication cycle.

It is found in the virion. Its subcellular location is the host cytoplasm. Its function is as follows. Self assembles to form an icosahedral capsid. Most capsids appear to be large particles with an icosahedral symmetry of T=4 and consist of 240 copies of capsid protein, though a fraction forms smaller T=3 particles consisting of 180 capsid proteins. Entering capsids are transported along microtubules to the nucleus. Phosphorylation of the capsid is thought to induce exposure of nuclear localization signal in the C-terminal portion of the capsid protein that allows binding to the nuclear pore complex via the importin (karyopherin-) alpha and beta. Capsids are imported in intact form through the nuclear pore into the nuclear basket, where it probably binds NUP153. Only capsids that contain the mature viral genome can release the viral DNA and capsid protein into the nucleoplasm. Immature capsids get stuck in the basket. Capsids encapsulate the pre-genomic RNA and the P protein. Pre-genomic RNA is reverse-transcribed into DNA while the capsid is still in the cytoplasm. The capsid can then either be directed to the nucleus, providing more genomes for transcription, or bud through the endoplasmic reticulum to provide new virions. This Homo sapiens (Human) protein is Capsid protein.